A 729-amino-acid polypeptide reads, in one-letter code: Circadian input-output histidine kinase CikA (729 aa).

The tract at residues 1–169 (MPQPIFDRIL…QVTTQIRQSL (169 aa)) is N-terminal domain. The segment at 170–314 (ELPELLKIAV…VEFLTHLSQH (145 aa)) is GAF domain. One can recognise a Histidine kinase domain in the interval 366–587 (TMSHELRTPL…TFTVGLPAIS (222 aa)). Position 369 is a phosphohistidine; by autocatalysis (His369). The psR domain, binds KaiB stretch occupies residues 613–729 (EGRIVLVSED…GLTSLATSAQ (117 aa)).

In the N-terminal section; belongs to the phytochrome family. In terms of assembly, homodimer. Part of the circadian clock (KaiA, KaiB, KaiC, CikA, RpaA, SasA), the composition of which varies during the circadian cycle. KaiA and CikA compete for binding to KaiB(fs). The PsR domain binds the KaiB:KaiC CI complex but poorly to either protein alone. KaiA and CikA bind to the same region of the KaiB(fs) form and therefore compete.

The enzyme catalyses ATP + protein L-histidine = ADP + protein N-phospho-L-histidine.. Functionally, functions in an input pathway to the Kai circadian clock. Senses oxidized quinones via its C-terminal pseudo-receiver domain, providing a link between cell metabolism and the clock. Affects the ratio of phosphorylated to unphosphorylated KaiC, binds quinones via its pseudo-receptor domain. Quinone-binding destabilizes the protein rapidly. Autophosphorylates, does not transfer the phosphate to its pseudo-receiver (PsR) domain. May play a role in cell division. Its function is as follows. Also functions in a two-component CikA/RpaA output pathway from the circadian clock, negatively regulating kaiBC expression independently of labA and of sasA. One of three clock output pathways. Dephosphorylates phospho-RpaA, enhanced by KaiB and KaiC, has only modest kinase activity on RpaA. The protein is Circadian input-output histidine kinase CikA of Thermosynechococcus vestitus (strain NIES-2133 / IAM M-273 / BP-1).